The chain runs to 138 residues: Putative pre-16S rRNA nuclease (138 aa).

The protein belongs to the YqgF nuclease family.

It localises to the cytoplasm. Functionally, could be a nuclease involved in processing of the 5'-end of pre-16S rRNA. This is Putative pre-16S rRNA nuclease from Carboxydothermus hydrogenoformans (strain ATCC BAA-161 / DSM 6008 / Z-2901).